Here is a 131-residue protein sequence, read N- to C-terminus: Small ribosomal subunit protein uS8 (131 aa).

It belongs to the universal ribosomal protein uS8 family. As to quaternary structure, part of the 30S ribosomal subunit. Contacts proteins S5 and S12.

Functionally, one of the primary rRNA binding proteins, it binds directly to 16S rRNA central domain where it helps coordinate assembly of the platform of the 30S subunit. The polypeptide is Small ribosomal subunit protein uS8 (Legionella pneumophila (strain Paris)).